A 281-amino-acid chain; its full sequence is 2-dehydro-3-deoxyphosphooctonate aldolase (281 aa).

It belongs to the KdsA family.

It is found in the cytoplasm. The enzyme catalyses D-arabinose 5-phosphate + phosphoenolpyruvate + H2O = 3-deoxy-alpha-D-manno-2-octulosonate-8-phosphate + phosphate. The protein operates within carbohydrate biosynthesis; 3-deoxy-D-manno-octulosonate biosynthesis; 3-deoxy-D-manno-octulosonate from D-ribulose 5-phosphate: step 2/3. It participates in bacterial outer membrane biogenesis; lipopolysaccharide biosynthesis. The chain is 2-dehydro-3-deoxyphosphooctonate aldolase from Acidithiobacillus ferrooxidans (strain ATCC 23270 / DSM 14882 / CIP 104768 / NCIMB 8455) (Ferrobacillus ferrooxidans (strain ATCC 23270)).